A 407-amino-acid polypeptide reads, in one-letter code: Imidazolonepropionase (407 aa).

Fe(3+)-binding residues include histidine 68 and histidine 70. Zn(2+)-binding residues include histidine 68 and histidine 70. 3 residues coordinate 4-imidazolone-5-propanoate: arginine 77, tyrosine 140, and histidine 173. N-formimidoyl-L-glutamate is bound at residue tyrosine 140. Histidine 238 contributes to the Fe(3+) binding site. Histidine 238 contributes to the Zn(2+) binding site. Glutamine 241 is a binding site for 4-imidazolone-5-propanoate. Aspartate 313 is a Fe(3+) binding site. Aspartate 313 contacts Zn(2+). Positions 315 and 317 each coordinate N-formimidoyl-L-glutamate. A 4-imidazolone-5-propanoate-binding site is contributed by threonine 318.

This sequence belongs to the metallo-dependent hydrolases superfamily. HutI family. Zn(2+) is required as a cofactor. It depends on Fe(3+) as a cofactor.

It is found in the cytoplasm. It catalyses the reaction 4-imidazolone-5-propanoate + H2O = N-formimidoyl-L-glutamate. It participates in amino-acid degradation; L-histidine degradation into L-glutamate; N-formimidoyl-L-glutamate from L-histidine: step 3/3. In terms of biological role, catalyzes the hydrolytic cleavage of the carbon-nitrogen bond in imidazolone-5-propanoate to yield N-formimidoyl-L-glutamate. It is the third step in the universal histidine degradation pathway. This is Imidazolonepropionase from Burkholderia ambifaria (strain MC40-6).